Reading from the N-terminus, the 392-residue chain is MAMPTIKHVRAFTVRGGGADYHDQDDGHWIDDHIATPMSRYPEYRESRRSFGINVLGTLVVEIEASDGSVGFAVTTGGEIGAFIVERHLARFLEGRCVTDIETMWDQMYYATLYYGRKGVVLNTISGVDLALWDLLGKVRGEPVYQLLGGPVRDELVFYATGARPDLAKQMGFIGGKLPLQHGPAENEEGLRKNLEKLADMRNRVGDDFWLMFDCWMSLDVRYATRLANAAHEYGLKWIEECLPPDDYWGYADLRRNVPRGMMVSTGEHEATRWGFRMLLEMGCCDLIQPDVGWCGGITELIKISALADAHNVMVVPHGSSVYSYHFVVTRHNSPFAEFLMMAPKADEVVPMFTPLLLDEPVPVNGRMKVPDRPGFGVRLNPECALVRPYTH.

Residues H22 and R48 each coordinate substrate. Mg(2+) contacts are provided by D214, E240, and E268. H318 functions as the Proton acceptor in the catalytic mechanism. Residue E338 coordinates substrate.

Belongs to the mandelate racemase/muconate lactonizing enzyme family. RhamD subfamily. In terms of assembly, homooctamer; tetramer of dimers. The cofactor is Mg(2+).

The enzyme catalyses L-rhamnonate = 2-dehydro-3-deoxy-L-rhamnonate + H2O. Functionally, catalyzes the dehydration of L-rhamnonate to 2-keto-3-deoxy-L-rhamnonate (KDR). This Burkholderia ambifaria (strain MC40-6) protein is L-rhamnonate dehydratase.